A 160-amino-acid chain; its full sequence is MLSPKRTKFRKQHRGRMRGVASKGNTIAFGQFALQAQDCGWVTARQIEASRRAMTRYIKRGGQIWIRIFPDKPVTMRPAETRMGSGKGNPEFWVAVVKPGRILFEMGGEDITEETAKEAMRLAQYKLPVKTKFISIDKNLENSSQENTKDSKKSQEEVKQ.

Positions 138–160 (KNLENSSQENTKDSKKSQEEVKQ) are disordered. The segment covering 147 to 160 (NTKDSKKSQEEVKQ) has biased composition (basic and acidic residues).

This sequence belongs to the universal ribosomal protein uL16 family. In terms of assembly, part of the 50S ribosomal subunit.

In terms of biological role, binds 23S rRNA and is also seen to make contacts with the A and possibly P site tRNAs. This chain is Large ribosomal subunit protein uL16, found in Prochlorococcus marinus (strain AS9601).